Here is a 97-residue protein sequence, read N- to C-terminus: Large ribosomal subunit protein bL28 (97 aa).

Belongs to the bacterial ribosomal protein bL28 family.

In Rickettsia peacockii (strain Rustic), this protein is Large ribosomal subunit protein bL28.